Here is a 125-residue protein sequence, read N- to C-terminus: MADLQKIVDDLSSLTVLEAAELAKLLEEKWGVSAAAAVAVAAAPGAGGAAAPAEEKTEFTVVLASAGDKKIEVIKEVRAITGLGLKEAKDLVEGAPKPLKEGVNKEEAEKVKAQLEKAGAKVELK.

As to quaternary structure, homodimer. Part of the ribosomal stalk of the 50S ribosomal subunit. Forms a multimeric L10(L12)X complex, where L10 forms an elongated spine to which 2 to 4 L12 dimers bind in a sequential fashion. Binds GTP-bound translation factors. Post-translationally, two isoforms seem to exist. One is probably dimethylated on Lys-69 and monomethylated on Lys-86 while the other is probably acetylated or trimethylated on both Lys-86 and Lys-89.

Its function is as follows. Forms part of the ribosomal stalk which helps the ribosome interact with GTP-bound translation factors. Is thus essential for accurate translation. In Rhodopseudomonas palustris (strain ATCC BAA-98 / CGA009), this protein is Large ribosomal subunit protein bL12.